Consider the following 228-residue polypeptide: Ornithine decarboxylase antizyme 1 (228 aa).

Residues 17 to 55 are disordered; the sequence is REKEGDKPSATIHASRTMPLLSLHSRGGSSSESSRVSLH. The segment covering 36-55 has biased composition (low complexity); sequence LLSLHSRGGSSSESSRVSLH.

It belongs to the ODC antizyme family. In terms of assembly, interacts with ODC1 and thereby sterically blocks ODC homodimerization. Forms a ternary complex with PSMB4 and OAZ1 before PSMB4 is incorporated into the 20S proteasome. Interacts with AZIN2; this interaction disrupts the interaction between the antizyme and ODC1. Interacts with FAM171A1.

In terms of biological role, ornithine decarboxylase (ODC) antizyme protein that negatively regulates ODC activity and intracellular polyamine biosynthesis and uptake in response to increased intracellular polyamine levels. Binds to ODC monomers, inhibiting the assembly of the functional ODC homodimer, and targets the monomers for ubiquitin-independent proteolytic destruction by the 26S proteasome. Triggers ODC degradation by inducing the exposure of a cryptic proteasome-interacting surface of ODC. Stabilizes AZIN2 by interfering with its ubiquitination. Also inhibits cellular uptake of polyamines by inactivating the polyamine uptake transporter. SMAD1/OAZ1/PSMB4 complex mediates the degradation of the CREBBP/EP300 repressor SNIP1. Involved in the translocation of AZIN2 from ER-Golgi intermediate compartment (ERGIC) to the cytosol. The chain is Ornithine decarboxylase antizyme 1 (OAZ1) from Homo sapiens (Human).